A 510-amino-acid chain; its full sequence is ATP synthase subunit alpha (510 aa).

169 to 176 (GDRQTGKT) lines the ATP pocket.

Belongs to the ATPase alpha/beta chains family. F-type ATPases have 2 components, CF(1) - the catalytic core - and CF(0) - the membrane proton channel. CF(1) has five subunits: alpha(3), beta(3), gamma(1), delta(1), epsilon(1). CF(0) has three main subunits: a(1), b(2) and c(9-12). The alpha and beta chains form an alternating ring which encloses part of the gamma chain. CF(1) is attached to CF(0) by a central stalk formed by the gamma and epsilon chains, while a peripheral stalk is formed by the delta and b chains.

Its subcellular location is the cell inner membrane. The catalysed reaction is ATP + H2O + 4 H(+)(in) = ADP + phosphate + 5 H(+)(out). Produces ATP from ADP in the presence of a proton gradient across the membrane. The alpha chain is a regulatory subunit. The chain is ATP synthase subunit alpha from Nitrobacter winogradskyi (strain ATCC 25391 / DSM 10237 / CIP 104748 / NCIMB 11846 / Nb-255).